Consider the following 220-residue polypeptide: Protein-L-isoaspartate O-methyltransferase (220 aa).

S65 is a catalytic residue.

The protein belongs to the methyltransferase superfamily. L-isoaspartyl/D-aspartyl protein methyltransferase family.

Its subcellular location is the cytoplasm. The catalysed reaction is [protein]-L-isoaspartate + S-adenosyl-L-methionine = [protein]-L-isoaspartate alpha-methyl ester + S-adenosyl-L-homocysteine. Catalyzes the methyl esterification of L-isoaspartyl residues in peptides and proteins that result from spontaneous decomposition of normal L-aspartyl and L-asparaginyl residues. It plays a role in the repair and/or degradation of damaged proteins. The polypeptide is Protein-L-isoaspartate O-methyltransferase (Pelodictyon phaeoclathratiforme (strain DSM 5477 / BU-1)).